An 81-amino-acid polypeptide reads, in one-letter code: Small hydrophobic protein (81 aa).

At 1–19 (MNSTSTIIEFTGEFWTYFT) the chain is on the intravirion side. Residues 20-40 (LVFMMLTIGFFFIVTSLVAAI) form a helical; Signal-anchor for type II membrane protein membrane-spanning segment. Residues 41 to 81 (LNKLCDLNDHHTNSLDIRTKLRSDTQLITRAHEESINQSSN) lie on the Virion surface side of the membrane. A glycan (N-linked (GlcNAc...) asparagine; by host) is linked at N77.

It belongs to the orthopneumovirus small hydrophobic protein family. In terms of assembly, homopentamer forming a funnel-like pore. Interacts with glycoprotein G; this interaction occurs on the surface of virion particles and infected cells. Interacts with host BCAP31 (via C-terminus); this interaction is direct. Post-translationally, four species of SH have been detected in infected cell cytoplasm: a 7.5 kDa non-glycosylated form (SH0), a 13-15 kDa form that contains one or two N-linked carbohydrate side chains of the high-mannose type (SHg), a 21-30 kDa polylactosaminoglycan-modified form of the protein (SHp), and the isoform generated by alternative translational initiation. Of these different forms, SH0 is by far the most abundant protein detected during virus infection. Tyrosine phosphorylated.

It is found in the virion membrane. The protein localises to the host cell membrane. It localises to the host Golgi apparatus membrane. The protein resides in the host endoplasmic reticulum membrane. Channel activity is inhibited by copper. Also inhibited by small-molecule pyronin B. In terms of biological role, viroporin that forms a homopentameric ion channel displaying low ion selectivity. May play a role in virus morphogenesis and pathogenicity at various stages of the viral life cycle. Accumulates at the membrane of the Golgi apparatus in infected cells and may facilitate virus release by modifying the secretory pathway. May enhance host membrane permeability and disrupt cellular ion homeostasis, which can be sensed as damage-associated molecular patterns/danger signals, triggering NLRP3 inflammasome activation and inflammatory immune response. Also inhibits host TNFA-mediated signaling pathway and may delay apoptosis, allowing time for the virus to replicate. This is Small hydrophobic protein (SH) from Bos taurus (Bovine).